The sequence spans 320 residues: Ferrochelatase (320 aa).

His194 and Glu275 together coordinate Fe cation.

Belongs to the ferrochelatase family. Monomer.

Its subcellular location is the cytoplasm. The catalysed reaction is heme b + 2 H(+) = protoporphyrin IX + Fe(2+). It functions in the pathway porphyrin-containing compound metabolism; protoheme biosynthesis; protoheme from protoporphyrin-IX: step 1/1. In terms of biological role, catalyzes the ferrous insertion into protoporphyrin IX. This Shigella dysenteriae serotype 1 (strain Sd197) protein is Ferrochelatase.